We begin with the raw amino-acid sequence, 946 residues long: MEPRGAAAGEPEPAVSPSFQARLWKNLQLGVGKGKGGGGGRAGGPERRTAATPTPSLPPPKTTQDVGSTGSRWSGFKKRKQVLDRVFSSSQPNLCCSSPEPLEPGGAGRAEQGSTLRRRLREHLLPVAKGSSTAAGTVGVTPPGGRSPDSAPSSSASSSLSSSPQPPPRGDRIRDEGTRRGSPEAHLCHQKSSSLPGTACLEQLLEPAPPPAEPARRPAEPQSLQKGEELDCSQKINPVETSNADVPLADPGMYQLDITLRRGQSLAARDRGGTSDPYVKFKIGRKEVFRSKIIHKNLNPVWEEKACVLIDHLREPLYIKVFDYDFGLQDDFMGSAFLDLTQLELNRPTDVTLTLKDPHYPDHDLGIILLSVILTPKEGEPRDVTMLMRKSWKRSSKFQTQSLRLSDQHRKSHLWRGIVSITLIEGRDLKAMDSNGLSDPYVKFRLGHQKYKSKIMPKTLNPQWREQFDFHLYEERGGVMDITAWDKDAGKRDDFIGRCQVDLSSLSREQTHKLELQLEEGEGHLVLLVTLTASATVSISDLSVNSMEDHKEREEILKRYSPLRIFNNIKDVGFLQVKVIRAEGLMAADVTGKSDPFCVVELNNDRLLTHTVYKNLNPEWNKVFTFNIKDIHSVLEVTVYDEDRDRSADFLGRVAIPLLSIQNGEQKAYVLKNKQLTGPTKGVIHLEIDVIFNAVKASLRTLIPKERKYIEEENRLSKQLLLRNFIRTKRCVMVLVNAAYYVNSCFDWDSPPRSLAAFVLFLLVVWNFELYMIPLLLLLLLTWNYFLIISGKDNRQRDTVVEDMLEDEEEEDDRDDKDGEKKGFINKIYAIQEVCVSVQNILDEAASLGERVKNTFNWTVPFLSWLAIIALCVFTAILYFIPLRYIVLVWGINKFTKKLRSPYAIDNNELLDFLSRVPSDVQVVQYQELKPDHSHSPYKRKKNNLG.

Disordered stretches follow at residues 28 to 193 (QLGV…QKSS) and 205 to 229 (LEPA…KGEE). Over residues 31-43 (VGKGKGGGGGRAG) the composition is skewed to gly residues. Residues 87 to 96 (FSSSQPNLCC) are compositionally biased toward polar residues. The segment covering 143–163 (PGGRSPDSAPSSSASSSLSSS) has biased composition (low complexity). Residues 169-187 (RGDRIRDEGTRRGSPEAHL) show a composition bias toward basic and acidic residues. C2 domains follow at residues 235–353 (KINP…DVTL), 399–516 (QTQS…KLEL), and 550–671 (HKER…AYVL). Positions 270, 276, 323, 325, 331, 433, 439, 486, 488, 494, 589, 595, 641, 643, and 649 each coordinate Ca(2+). 2 helical membrane-spanning segments follow: residues 758–778 (FVLF…LLLL) and 861–881 (PFLS…LYFI).

The protein belongs to the MCTP family. The cofactor is Ca(2+). As to expression, expressed in the brain and central nervous system (at protein level). Isoform 1 and isoform 2 are expressed in the brain, kidney, liver, heart, lung, skeletal muscle, testis and spleen. Isoform 2 shows a higher expression in the brain, heart and skeletal muscle.

It localises to the cytoplasmic vesicle. The protein resides in the secretory vesicle. The protein localises to the synaptic vesicle membrane. It is found in the recycling endosome. Its subcellular location is the endoplasmic reticulum membrane. Functionally, calcium sensor which is essential for the stabilization of normal baseline neurotransmitter release and for the induction and long-term maintenance of presynaptic homeostatic plasticity. Overexpression in cultured neurons significantly inhibits neuronal transferrin endocytosis, secretory vesicle retrieval, cell migration, and oxidative stress from glutamate toxicity. The polypeptide is Multiple C2 and transmembrane domain-containing protein 1 (Rattus norvegicus (Rat)).